The following is a 301-amino-acid chain: Pseudouridine-5'-phosphate glycosidase (301 aa).

The active-site Proton donor is the glutamate 23. The substrate site is built by lysine 84 and valine 104. Aspartate 136 is a binding site for Mn(2+). Residue serine 138 to aspartate 140 coordinates substrate. The active-site Nucleophile is the lysine 157.

It belongs to the pseudouridine-5'-phosphate glycosidase family. Homotrimer. Requires Mn(2+) as cofactor.

The catalysed reaction is D-ribose 5-phosphate + uracil = psi-UMP + H2O. In terms of biological role, catalyzes the reversible cleavage of pseudouridine 5'-phosphate (PsiMP) to ribose 5-phosphate and uracil. Functions biologically in the cleavage direction, as part of a pseudouridine degradation pathway. The polypeptide is Pseudouridine-5'-phosphate glycosidase (Mycoplasmopsis agalactiae (strain NCTC 10123 / CIP 59.7 / PG2) (Mycoplasma agalactiae)).